We begin with the raw amino-acid sequence, 274 residues long: Putative phosphatase BUsg_029 (274 aa).

The Nucleophile role is filled by Asp-8. Asp-8 contributes to the Mg(2+) binding site. Residue Leu-9 coordinates phosphate. Asp-10 is a Mg(2+) binding site. Phosphate contacts are provided by residues 42–43 (SG) and Lys-191. Position 214 (Asp-214) interacts with Mg(2+). A phosphate-binding site is contributed by Asn-217.

Belongs to the HAD-like hydrolase superfamily. Cof family. The cofactor is Mg(2+).

The chain is Putative phosphatase BUsg_029 from Buchnera aphidicola subsp. Schizaphis graminum (strain Sg).